The chain runs to 277 residues: Methyltransferase adrK (277 aa).

S-adenosyl-L-methionine contacts are provided by residues 123–124, 150–151, and 151–152; these read DL, DV, and VL.

Belongs to the class I-like SAM-binding methyltransferase superfamily. Homodimer.

It functions in the pathway secondary metabolite biosynthesis; terpenoid biosynthesis. Functionally, methyltransferase; part of the gene cluster that mediates the biosynthesis of andrastins, meroterpenoid compounds that exhibit inhibitory activity against ras farnesyltransferase, suggesting that they could be promising leads for antitumor agents. The first step of the pathway is the synthesis of 3,5-dimethylorsellinic acid (DMOA) by the polyketide synthase adrD via condensation of one acetyl-CoA starter unit with 3 malonyl-CoA units and 2 methylations. DMAO is then converted to farnesyl-DMAO by the prenyltransferase adrG. The methyltransferase adrK catalyzes the methylation of the carboxyl group of farnesyl-DMAO to farnesyl-DMAO methyl ester which is further converted to epoxyfarnesyl-DMAO methyl ester by the FAD-dependent monooxygenase adrH. The terpene cyclase adrI then catalyzes the carbon skeletal rearrangement to generate the andrastin E, the first compound in the pathway having the andrastin scaffold, with the tetracyclic ring system. The post-cyclization tailoring enzymes adrF, adrE, adrJ, and adrA, are involved in the conversion of andrastin E into andrastin A. The short chain dehydrogenase adrF is responsible for the oxidation of the C-3 a hydroxyl group of andrastin E to yield the corresponding ketone, andrastin D. The ketoreductase adrE stereoselectively reduces the carbonyl moiety to reverse the stereochemistry of the C-3 position to yield andrastin F. The acetyltransferase adrJ is the acetyltransferase that attaches the acetyl group to the C-3 hydroxyl group of andrastin F to yield andrastin C. Finally, the cytochrome P450 monooxygenase adrA catalyzes two sequential oxidation reactions of the C-23 methyl group, to generate the corresponding alcohol andrastin B, and aldehyde andrastin A. This chain is Methyltransferase adrK, found in Penicillium rubens (strain ATCC 28089 / DSM 1075 / NRRL 1951 / Wisconsin 54-1255) (Penicillium chrysogenum).